The following is a 182-amino-acid chain: Large ribosomal subunit protein uL5 (182 aa).

The protein belongs to the universal ribosomal protein uL5 family. Part of the 50S ribosomal subunit; part of the 5S rRNA/L5/L18/L25 subcomplex. Contacts the 5S rRNA and the P site tRNA. Forms a bridge to the 30S subunit in the 70S ribosome.

This is one of the proteins that bind and probably mediate the attachment of the 5S RNA into the large ribosomal subunit, where it forms part of the central protuberance. In the 70S ribosome it contacts protein S13 of the 30S subunit (bridge B1b), connecting the 2 subunits; this bridge is implicated in subunit movement. Contacts the P site tRNA; the 5S rRNA and some of its associated proteins might help stabilize positioning of ribosome-bound tRNAs. The chain is Large ribosomal subunit protein uL5 from Borrelia garinii subsp. bavariensis (strain ATCC BAA-2496 / DSM 23469 / PBi) (Borreliella bavariensis).